We begin with the raw amino-acid sequence, 1009 residues long: MEALTLWLLPWICQCVSVRADSIIHIGAIFEENAAKDDRVFQLAVSDLSLNDDILQSEKITYSIKVIEANNPFQAVQEACDLMTQGILALVTSTGCASANALQSLTDAMHIPHLFVQRNPGGSPRTACHLNPSPDGEAYTLASRPPVRLNDVMLRLVTELRWQKFVMFYDSEYDIRGLQSFLDQASRLGLDVSLQKVDKNISHVFTSLFTTMKTEELNRYRDTLRRAILLLSPQGAHSFINEAVETNLASKDSHWVFVNEEISDPEILDLVHSALGRMTVVRQIFPSAKDNQKCTRNNHRISSLLCDPQEGYLQMLQISNLYLYDSVLMLANAFHRKLEDRKWHSMASLNCIRKSTKPWNGGRSMLDTIKKGHITGLTGVMEFREDSSNPYVQFEILGTTYSETFGKDMRKLATWDSEKGLNGSLQERPMGSRLQGLTLKVVTVLEEPFVMVAENILGQPKRYKGFSIDVLDALAKALGFKYEIYQAPDGRYGHQLHNTSWNGMIGELISKRADLAISAITITPERESVVDFSKRYMDYSVGILIKKPEEKISIFSLFAPFDFAVWACIAAAIPVVGVLIFVLNRIQAVRAQSAAQPRPSASATLHSAIWIVYGAFVQQGGESSVNSMAMRIVMGSWWLFTLIVCSSYTANLAAFLTVSRMDNPIRTFQDLSKQVEMSYGTVRDSAVYEYFRAKGTNPLEQDSTFAELWRTISKNGGADNCVSSPSEGIRKAKKGNYAFLWDVAVVEYAALTDDDCSVTVIGNSISSKGYGIALQHGSPYRDLFSQRILELQDTGDLDVLKQKWWPHMGRCDLTSHASAQADGKSLKLHSFAGVFCILAIGLLLACLVAALELWWNSNRCHQETPKEDKEVNLEQVHRRMNSLMDEDIAHKQISPASIELSALEMGGLAPTQTLEPTREYQNTQLSVSTFLPEQSSHGTSRTLSSGPSSNLPLPLSSSATMPSMQCKHRSPNGGLFRQSPVKTPIPMSFQPVPGGVLPEALDTSHGTSI.

The signal sequence occupies residues 1-20; sequence MEALTLWLLPWICQCVSVRA. Residues 21 to 436 are interaction with CBLN1; sequence DSIIHIGAIF…ERPMGSRLQG (416 aa). Residues 21-562 lie on the Extracellular side of the membrane; the sequence is DSIIHIGAIF…SIFSLFAPFD (542 aa). 3 cysteine pairs are disulfide-bonded: cysteine 80/cysteine 351, cysteine 96/cysteine 128, and cysteine 294/cysteine 306. 2 N-linked (GlcNAc...) asparagine glycosylation sites follow: asparagine 131 and asparagine 200. Residues asparagine 422 and asparagine 498 are each glycosylated (N-linked (GlcNAc...) asparagine). Residues glutamate 527, valine 530, and aspartate 531 each coordinate Ca(2+). The chain crosses the membrane as a helical span at residues 563 to 583; that stretch reads FAVWACIAAAIPVVGVLIFVL. The Cytoplasmic portion of the chain corresponds to 584 to 637; it reads NRIQAVRAQSAAQPRPSASATLHSAIWIVYGAFVQQGGESSVNSMAMRIVMGSW. A helical transmembrane segment spans residues 638–658; that stretch reads WLFTLIVCSSYTANLAAFLTV. Topologically, residues 659–830 are extracellular; it reads SRMDNPIRTF…ADGKSLKLHS (172 aa). Residues aspartate 753, aspartate 755, and serine 757 each contribute to the Ca(2+) site. The chain crosses the membrane as a helical span at residues 831–851; it reads FAGVFCILAIGLLLACLVAAL. Residues 852–1009 lie on the Cytoplasmic side of the membrane; that stretch reads ELWWNSNRCH…ALDTSHGTSI (158 aa). Over residues 930-942 the composition is skewed to polar residues; sequence FLPEQSSHGTSRT. The tract at residues 930-954 is disordered; that stretch reads FLPEQSSHGTSRTLSSGPSSNLPLP. The span at 943-954 shows a compositional bias: low complexity; the sequence is LSSGPSSNLPLP.

It belongs to the glutamate-gated ion channel (TC 1.A.10.1) family. GRID1 subfamily. Homodimer. Interacts (via extracellular N-terminal domain) with CBLN1 (via C1q domain), and more weakly with CBLN2; the interactions mediate the trans-synaptic adhesion complexes also with neurexins and are required for ligand-gated cation channel activity.

It is found in the postsynaptic cell membrane. The catalysed reaction is Ca(2+)(in) = Ca(2+)(out). The enzyme catalyses Na(+)(in) = Na(+)(out). Its function is as follows. Member of the ionotropic glutamate receptor family, which plays a crucial role in synaptic organization and signal transduction in the central nervous system. Although it shares structural features with ionotropic glutamate receptors, does not bind glutamate as a primary ligand. Instead, forms trans-synaptic adhesion complexes with presynaptic neurexins and cerebellins, regulating NMDA and AMPA receptor activity and influencing synaptic plasticity through signal transduction. In the presence of neurexins and cerebellins, forms cation-selective channels that are proposed to be gated by glycine and D-serine. However, recent research disputes this ligand-gated cation channel activity. Cation-selective ion channel can be triggered by GRM1 in dopaminergic neurons. Also acts as a receptor for GABA, modulating inhibitory synaptic plasticity through non-ionotropic mechanisms. The sequence is that of Glutamate receptor ionotropic, delta-1 from Homo sapiens (Human).